A 175-amino-acid polypeptide reads, in one-letter code: Large ribosomal subunit protein uL10 (175 aa).

It belongs to the universal ribosomal protein uL10 family. Part of the ribosomal stalk of the 50S ribosomal subunit. The N-terminus interacts with L11 and the large rRNA to form the base of the stalk. The C-terminus forms an elongated spine to which L12 dimers bind in a sequential fashion forming a multimeric L10(L12)X complex.

In terms of biological role, forms part of the ribosomal stalk, playing a central role in the interaction of the ribosome with GTP-bound translation factors. The protein is Large ribosomal subunit protein uL10 of Prochlorococcus marinus (strain AS9601).